Reading from the N-terminus, the 399-residue chain is S-adenosylmethionine synthase (399 aa).

His17 lines the ATP pocket. A Mg(2+)-binding site is contributed by Asp19. Glu45 is a K(+) binding site. 2 residues coordinate L-methionine: Glu58 and Gln101. Residues 101 to 111 form a flexible loop region; it reads QSADIAMGVDQ. Residues 177–179, 244–245, Asp253, 259–260, Ala276, and Lys280 contribute to the ATP site; these read DGK, RF, and RK. Asp253 contributes to the L-methionine binding site. Lys284 lines the L-methionine pocket.

This sequence belongs to the AdoMet synthase family. Homotetramer; dimer of dimers. Mg(2+) serves as cofactor. Requires K(+) as cofactor.

It is found in the cytoplasm. It catalyses the reaction L-methionine + ATP + H2O = S-adenosyl-L-methionine + phosphate + diphosphate. It functions in the pathway amino-acid biosynthesis; S-adenosyl-L-methionine biosynthesis; S-adenosyl-L-methionine from L-methionine: step 1/1. In terms of biological role, catalyzes the formation of S-adenosylmethionine (AdoMet) from methionine and ATP. The overall synthetic reaction is composed of two sequential steps, AdoMet formation and the subsequent tripolyphosphate hydrolysis which occurs prior to release of AdoMet from the enzyme. The protein is S-adenosylmethionine synthase of Bacillus cereus (strain G9842).